Consider the following 1212-residue polypeptide: MKLVVVESPAKAKTIEKYLGSGYQVLASYGHIRDLPSKDGSVNPDNGFSMVWQNYPDKAHRLKAIEDAVKESDSLILATDPDREGEAISWHILELLKTKKLLPDDVERVTFNAITKAAVTDAMAHPRQLDNDLINAYLARRALDYLVGFTLSPILWRKLPGAKSAGRVQSVALRLVVDREQEIEGFKPQEYWSVEADMEADSIGFTSRLIQWRGQKLEKLSIADKTQAEAAQSDVESGHFTVSNVETKPVSRNPQPPFTTSTLQQEAARKLGFAASHTMRLAQSLYEEGLITYMRTDGVQMDESAIAAARKTITQRYDGGYVPDKPRQYQVKAKNAQEAHEAIRPTDFSRDKAASGDHARLYELIWKRALASQMASAKLERTTVDLTDGTGQNVLRVTGQVVLFSGFLTLYEESADDNANDRDGKEGRARLPLLRAGDAPLKKEVRADQHFTQPPPRYSEASLVKKMEDLGIGRPSTYASVIQVLKDRAYVTLERNRFIPSEAGRLLTAFLERFFERYVSYDFTAGLEDSLDEISGGRADWQKVLDAFWHDFKPKTAEVMEQQPSAITAELDKFLEPWLFPDKGDGHDPRECPSCHTGRLALKGGRFGAFIACSNYPECKYTRGFGQGEDGVDDNEPVLLGYMPENSDDDGYMAFSDQGDILPANTASASETGVTDGGIAANAAFSGKGNSASHTDRDDLPFDPDEPASSTGNVASSQSRMTGDETASSGNSRDSSAHGVSTTAGIDAESQAGISNQALAGKNNAGRTAVSDNKGNNSSSTIAAARKGGSTDDNATVSDPDGDIGSGASSSGQDADNRLLSHRNGDIDSRAIPADHKDSSSDQNASHALSPDRNSDDASVSNSDKKIDSKAVSTGHDVGNAITSDNSPSDNVAHLASTPSSATSSVKVALETENNDTAASKADEQAKEEEESRKARAVTRRTGRFGPYIQLGEGKNAKRVSVPRDVNPREVDFSLASRLLALPREIGLHPESGKMIIAGTGRYGPYLNCDGKYARLSSTEELLDIDIDRAVVKLAEAAQNKGRTGATLSREPLKVFGDSPVTEKPVQLMNGRYGPYVTDGETNASLPKDTTPESLTFEEALALLEARAKMPKKKKTKKAAAKKPAAKKTTTKKAAPKKATTKTATPKSATTDNATSEDGDATPAKSPAKKAVAKKTTAKKPASKSATKKAPSSKTTAAKKTSKATPKDEVAE.

A Toprim domain is found at 1-114 (MKLVVVESPA…DVERVTFNAI (114 aa)). Glu7 and Asp80 together coordinate Mg(2+). One can recognise a Topo IA-type catalytic domain in the interval 130-556 (DNDLINAYLA…AFWHDFKPKT (427 aa)). The tract at residues 164–169 (SAGRVQ) is interaction with DNA. Tyr293 functions as the O-(5'-phospho-DNA)-tyrosine intermediate in the catalytic mechanism. The C4-type zinc-finger motif lies at 592–619 (CPSCHTGRLALKGGRFGAFIACSNYPEC). 3 disordered regions span residues 687 to 742 (GKGN…GVST), 758 to 937 (ALAG…KARA), and 1107 to 1212 (RAKM…EVAE). Polar residues-rich tracts occupy residues 708-742 (ASST…GVST) and 770-782 (VSDN…SSTI). The segment covering 815–840 (ADNRLLSHRNGDIDSRAIPADHKDSS) has biased composition (basic and acidic residues). Polar residues-rich tracts occupy residues 881-890 (AITSDNSPSD) and 897-906 (STPSSATSSV). Positions 921–934 (KADEQAKEEEESRK) are enriched in basic and acidic residues. Over residues 1109–1140 (KMPKKKKTKKAAAKKPAAKKTTTKKAAPKKAT) the composition is skewed to basic residues. A compositionally biased stretch (low complexity) spans 1141 to 1151 (TKTATPKSATT). Residues 1167–1182 (PAKKAVAKKTTAKKPA) show a composition bias toward basic residues. Over residues 1183–1199 (SKSATKKAPSSKTTAAK) the composition is skewed to low complexity.

The protein belongs to the type IA topoisomerase family. Monomer. Mg(2+) is required as a cofactor.

It catalyses the reaction ATP-independent breakage of single-stranded DNA, followed by passage and rejoining.. Its function is as follows. Releases the supercoiling and torsional tension of DNA, which is introduced during the DNA replication and transcription, by transiently cleaving and rejoining one strand of the DNA duplex. Introduces a single-strand break via transesterification at a target site in duplex DNA. The scissile phosphodiester is attacked by the catalytic tyrosine of the enzyme, resulting in the formation of a DNA-(5'-phosphotyrosyl)-enzyme intermediate and the expulsion of a 3'-OH DNA strand. The free DNA strand then undergoes passage around the unbroken strand, thus removing DNA supercoils. Finally, in the religation step, the DNA 3'-OH attacks the covalent intermediate to expel the active-site tyrosine and restore the DNA phosphodiester backbone. This chain is DNA topoisomerase 1, found in Zymomonas mobilis subsp. mobilis (strain ATCC 31821 / ZM4 / CP4).